The following is a 459-amino-acid chain: Putrescine aminotransferase (459 aa).

Pyridoxal 5'-phosphate is bound by residues 150–151 (GT) and Gln274. Position 300 is an N6-(pyridoxal phosphate)lysine (Lys300). Residue Thr332 participates in pyridoxal 5'-phosphate binding.

Belongs to the class-III pyridoxal-phosphate-dependent aminotransferase family. Putrescine aminotransferase subfamily. Pyridoxal 5'-phosphate is required as a cofactor.

It catalyses the reaction an alkane-alpha,omega-diamine + 2-oxoglutarate = an omega-aminoaldehyde + L-glutamate. It carries out the reaction putrescine + 2-oxoglutarate = 1-pyrroline + L-glutamate + H2O. The enzyme catalyses cadaverine + 2-oxoglutarate = 5-aminopentanal + L-glutamate. The protein operates within amine and polyamine degradation; putrescine degradation; 4-aminobutanal from putrescine (transaminase route): step 1/1. Its function is as follows. Catalyzes the aminotransferase reaction from putrescine to 2-oxoglutarate, leading to glutamate and 4-aminobutanal, which spontaneously cyclizes to form 1-pyrroline. This is the first step in one of two pathways for putrescine degradation, where putrescine is converted into 4-aminobutanoate (gamma-aminobutyrate or GABA) via 4-aminobutanal. Also functions as a cadaverine transaminase in a a L-lysine degradation pathway to succinate that proceeds via cadaverine, glutarate and L-2-hydroxyglutarate. The protein is Putrescine aminotransferase of Escherichia coli (strain ATCC 8739 / DSM 1576 / NBRC 3972 / NCIMB 8545 / WDCM 00012 / Crooks).